A 429-amino-acid chain; its full sequence is Adenylosuccinate synthetase (429 aa).

Residues 12–18 and 40–42 contribute to the GTP site; these read GDEGKGK and GHT. Asp13 serves as the catalytic Proton acceptor. The Mg(2+) site is built by Asp13 and Gly40. Residues 13-16, 38-41, Thr128, Arg142, Gln223, Thr238, and Arg302 contribute to the IMP site; these read DEGK and NAGH. Residue His41 is the Proton donor of the active site. 298–304 contacts substrate; the sequence is TVTGRPR. GTP contacts are provided by residues Arg304, 330 to 332, and 412 to 414; these read LLD and SVG.

This sequence belongs to the adenylosuccinate synthetase family. As to quaternary structure, homodimer. It depends on Mg(2+) as a cofactor.

The protein localises to the cytoplasm. The enzyme catalyses IMP + L-aspartate + GTP = N(6)-(1,2-dicarboxyethyl)-AMP + GDP + phosphate + 2 H(+). The protein operates within purine metabolism; AMP biosynthesis via de novo pathway; AMP from IMP: step 1/2. Its function is as follows. Plays an important role in the de novo pathway of purine nucleotide biosynthesis. Catalyzes the first committed step in the biosynthesis of AMP from IMP. This Lactobacillus acidophilus (strain ATCC 700396 / NCK56 / N2 / NCFM) protein is Adenylosuccinate synthetase.